The chain runs to 374 residues: tRNA-specific 2-thiouridylase MnmA (374 aa).

ATP is bound by residues glycine 17–serine 24 and methionine 43. The interval asparagine 103–aspartate 105 is interaction with target base in tRNA. Residue cysteine 108 is the Nucleophile of the active site. Residues cysteine 108 and cysteine 204 are joined by a disulfide bond. Residue glycine 132 coordinates ATP. The tract at residues lysine 154 to glutamine 156 is interaction with tRNA. Residue cysteine 204 is the Cysteine persulfide intermediate of the active site. The interaction with tRNA stretch occupies residues arginine 316–tyrosine 317.

The protein belongs to the MnmA/TRMU family.

The protein resides in the cytoplasm. The enzyme catalyses S-sulfanyl-L-cysteinyl-[protein] + uridine(34) in tRNA + AH2 + ATP = 2-thiouridine(34) in tRNA + L-cysteinyl-[protein] + A + AMP + diphosphate + H(+). In terms of biological role, catalyzes the 2-thiolation of uridine at the wobble position (U34) of tRNA, leading to the formation of s(2)U34. The sequence is that of tRNA-specific 2-thiouridylase MnmA from Pseudomonas fluorescens (strain Pf0-1).